A 264-amino-acid polypeptide reads, in one-letter code: Proteasome subunit alpha type-4 (264 aa).

It belongs to the peptidase T1A family. The 26S proteasome consists of a 20S proteasome core and two 19S regulatory subunits. The 20S proteasome core is composed of 28 subunits that are arranged in four stacked rings, resulting in a barrel-shaped structure. The two end rings are each formed by seven alpha subunits, and the two central rings are each formed by seven beta subunits. The catalytic chamber with the active sites is on the inside of the barrel. Interacts with PI31.

It is found in the cytoplasm. It localises to the nucleus. Functionally, the proteasome is a multicatalytic proteinase complex which is characterized by its ability to cleave peptides with Arg, Phe, Tyr, Leu, and Glu adjacent to the leaving group at neutral or slightly basic pH. The proteasome has an ATP-dependent proteolytic activity. This is Proteasome subunit alpha type-4 (Prosalpha3) from Drosophila melanogaster (Fruit fly).